Consider the following 570-residue polypeptide: CDKN2A-interacting protein (570 aa).

Ala2 is subject to N-acetylalanine. Residues 19–126 (VETLRCEGET…KVKKRGISSS (108 aa)) enclose the XRN2-binding (XTBD) domain. Residues 122–345 (GISSSNEGVE…TSLLMPKSSS (224 aa)) are disordered. Ser124 carries the phosphoserine modification. Positions 147 to 162 (VERDHGKKSAKTDRSA) are enriched in basic and acidic residues. Over residues 167–183 (SSGSKGSSTKSESSGTS) the composition is skewed to low complexity. Residue Lys176 forms a Glycyl lysine isopeptide (Lys-Gly) (interchain with G-Cter in SUMO1) linkage. Positions 184–198 (ARSNSGVSHQNSSTS) are enriched in polar residues. Positions 203-221 (SVCSQSSSNSSQVTSAGSG) are enriched in low complexity. The segment covering 224–233 (SEPEAPDKHG) has biased composition (basic and acidic residues). Residue Ser234 is modified to Phosphoserine. 2 stretches are compositionally biased toward low complexity: residues 234-248 (SASFVSSLLKSSLNS) and 271-301 (SSVSVSQSSSEIEVPLLGSSGSSEVELPLLS). Residues 302–317 (CKSSSETASSGLTTKA) are compositionally biased toward polar residues. Residues 318–345 (SSEANISSSVSKNSSSSGTSLLMPKSSS) are compositionally biased toward low complexity. At Ser378 the chain carries Phosphoserine. The tract at residues 383 to 407 (SQLASKSSSQSSTSQLPSKSTSQSS) is disordered. The DRBM domain occupies 452–527 (NHGELLNAAI…SREALKLFLK (76 aa)).

Belongs to the CARF family. In terms of assembly, interacts with CDKN2A/p14ARF, p53/TP53 and MDM2. Interacts with CHEK2 and MAPK3. Interacts with XRN2. Post-translationally, may be ubiquitinated.

It localises to the nucleus. The protein localises to the nucleoplasm. Regulates DNA damage response and cell proliferation in a dose-dependent manner through a number of signaling pathways involved in cell proliferation, apoptosis and senescence. This is CDKN2A-interacting protein (Cdkn2aip) from Rattus norvegicus (Rat).